The following is a 384-amino-acid chain: Thylakoid membrane protein TERC, chloroplastic (384 aa).

The transit peptide at 1-48 (MSLASVIHHGILPPAKSDRIFLTIPVFPPDFRARGWTKSPFSLLINPS) directs the protein to the chloroplast. Residues 49-115 (LASAANRRLS…DYQQEETYKT (67 aa)) lie on the Stromal side of the membrane. Residues 68-104 (GIDQEDEEKESRELLPHKNDENATTSRSSSSVDSGGL) form a disordered region. Over residues 76–88 (KESRELLPHKNDE) the composition is skewed to basic and acidic residues. The helical transmembrane segment at 116 to 136 (SFKTVALCVGTAVAFGIGIGL) threads the bilayer. Residues 137-145 (KEGVGKASE) lie on the Lumenal, thylakoid side of the membrane. The helical transmembrane segment at 146-166 (FFAGYILEQSLSVDNLFVFVL) threads the bilayer. Residues 167–180 (VFKYFKVPLMYQNK) lie on the Stromal side of the membrane. A helical transmembrane segment spans residues 181–201 (VLTYGIAGAIVFRFTLILLGT). Over 202 to 206 (ATLQK) the chain is Lumenal, thylakoid. Residues 207 to 227 (FEAVNLLLAAVLLYSSFKLFA) form a helical membrane-spanning segment. Residues 228–275 (SEEDDTDLSDNFIVKTCQRFIPVTSSYDGNRFFTKHDGILKATPLLLT) lie on the Stromal side of the membrane. The helical transmembrane segment at 276 to 296 (VAVIELSDIAFAVDSIPAVFG) threads the bilayer. Topologically, residues 297–301 (VTRDP) are lumenal, thylakoid. A helical transmembrane segment spans residues 302–322 (FIVLTSNLFAILGLRSLYTLI). At 323–335 (SEGMDELEYLQPS) the chain is on the stromal side. The chain crosses the membrane as a helical span at residues 336-356 (IAVVLGFIGVKMILDFFGFHI). A topological domain (lumenal, thylakoid) is located at residue serine 357. A helical transmembrane segment spans residues 358–378 (TEASLGVVALSLSTGVLLSLT). Over 379 to 384 (NKSSDS) the chain is Stromal.

As to quaternary structure, interacts with ALB3. In terms of tissue distribution, expressed in roots, rosette and cauline leaves, stems and flowers.

The protein localises to the plastid. It is found in the chloroplast thylakoid membrane. Functionally, integral thylakoid membrane protein that plays a crucial role in thylakoid membrane biogenesis and thylakoid formation in early chloroplast development. Is essential for de novo synthesis of photosystem II (PSII) core proteins and required for efficient insertion of thylakoid membrane proteins, presumably via interaction with ALB3. May assist synthesis of thylakoid membrane proteins at the membrane insertion step. The protein is Thylakoid membrane protein TERC, chloroplastic of Arabidopsis thaliana (Mouse-ear cress).